The primary structure comprises 1378 residues: Disease resistance protein RRS1 (1378 aa).

The TIR domain maps to 5-146 (EKDEEFVCIS…EIVRDVYETH (142 aa)). The NB-ARC domain occupies 170–421 (IGIRCVGIWG…LLEGCGFFPH (252 aa)). ATP is bound at residue 179-186 (GMPGIGKT). LRR repeat units follow at residues 498–522 (SEEI…AFKN), 535–553 (NPEV…HSLP), 554–575 (NELR…NFDP), 577–598 (HLVE…TKNL), 621–646 (AENL…RLLR), 665–688 (PPNI…TVKP), 742–766 (LPNM…SIQG), 768–793 (PRFL…SLEI), and 831–854 (PRNL…PLSL). The Nuclear localization signal signature appears at 988–1005 (RNFHCWAPGKVVPKVRKD). A DNA-binding region (WRKY) is located at residues 1204-1272 (IPAIDEGDLW…YLSEHNHPRP (69 aa)). The segment at 1300-1321 (RVFQNKDEPNQPHLPSSSTPPR) is disordered.

Interacts with PopP2, a R.solanacearum type III effector.

Its subcellular location is the nucleus. It localises to the cytoplasm. Transcription factor. Interacts specifically with the W box (5'-(T)TGAC[CT]-3'), a frequently occurring elicitor-responsive cis-acting element. Also acts as a disease resistance protein involved in resistance to fungal and bacterial pathogens, including R.solanacearum, P.syringae pv. tomato and C.higginsianum. RRS1 mediated resistance depends on salicylic acid and NDR1 (AC O48915). This Arabidopsis thaliana (Mouse-ear cress) protein is Disease resistance protein RRS1.